A 219-amino-acid polypeptide reads, in one-letter code: MIYISPKLVVALPVKELKDLNRIELLINDVDLVELRLDYLSKFDVDILDLFSKYKEKLIITLRDKDEGGVNYIDPAFKANFVRRMEREKFMYDIEARFALRYQVNVKDKIVSIHYFDNLPEFTEVKEIFDKFDEAYLRKIAVIAKRGYRELLMRVLDNYDNAVVMPMGVNGVERIAFSLLGSKLIYAHAGEETAKGQLHYKDVRRILNQLSTIMSSPST.

Residues 34 to 36 (ELR) and R63 each bind 3-dehydroquinate. Residue H114 is the Proton donor/acceptor of the active site. The Schiff-base intermediate with substrate role is filled by K139. Residues R174, T193, and Q197 each coordinate 3-dehydroquinate.

This sequence belongs to the type-I 3-dehydroquinase family. In terms of assembly, homodimer.

The enzyme catalyses 3-dehydroquinate = 3-dehydroshikimate + H2O. Its pathway is metabolic intermediate biosynthesis; chorismate biosynthesis; chorismate from D-erythrose 4-phosphate and phosphoenolpyruvate: step 3/7. Its function is as follows. Involved in the third step of the chorismate pathway, which leads to the biosynthesis of aromatic amino acids. Catalyzes the cis-dehydration of 3-dehydroquinate (DHQ) and introduces the first double bond of the aromatic ring to yield 3-dehydroshikimate. This Sulfolobus acidocaldarius (strain ATCC 33909 / DSM 639 / JCM 8929 / NBRC 15157 / NCIMB 11770) protein is 3-dehydroquinate dehydratase.